A 227-amino-acid chain; its full sequence is Germin-like protein 3-3 (227 aa).

Positions 1–26 are cleaved as a signal peptide; the sequence is MECFKTTLAGVVLVVLLLQQAPVLRA. Residues cysteine 36 and cysteine 51 are joined by a disulfide bond. The Cupin type-1 domain occupies 65 to 217; sequence SRLATGGDVN…ALRVDAGVVE (153 aa). Asparagine 78 and asparagine 81 each carry an N-linked (GlcNAc...) asparagine glycan. Residues histidine 114, histidine 116, glutamate 121, and histidine 163 each contribute to the Mn(2+) site.

This sequence belongs to the germin family. In terms of assembly, oligomer (believed to be a pentamer but probably hexamer).

It localises to the secreted. The protein resides in the extracellular space. Its subcellular location is the apoplast. Functionally, may play a role in plant defense. Probably has no oxalate oxidase activity even if the active site is conserved. This chain is Germin-like protein 3-3, found in Oryza sativa subsp. japonica (Rice).